The sequence spans 339 residues: NADH-quinone oxidoreductase subunit H (339 aa).

Transmembrane regions (helical) follow at residues 19-39, 87-107, 120-140, 153-173, 191-211, 253-273, 275-295, and 310-330; these read LLKIIAIVGPLMGAVAYLTLA, FLLGPVLAIAPALAAWAVVPF, LLYILAMTSVGVYGVIIAGWA, SAAQIVSYEIAMGFALVGVLM, FWEWYWLPLFPLFIVYFISAV, ILVAMLAALMFLGGWLSPVPF, PDSILWLLFKVAALLFFFLWF, and LGWKVFIPVTLVWILFVGAMM.

This sequence belongs to the complex I subunit 1 family. As to quaternary structure, NDH-1 is composed of 14 different subunits. Subunits NuoA, H, J, K, L, M, N constitute the membrane sector of the complex.

It localises to the cell inner membrane. The enzyme catalyses a quinone + NADH + 5 H(+)(in) = a quinol + NAD(+) + 4 H(+)(out). Functionally, NDH-1 shuttles electrons from NADH, via FMN and iron-sulfur (Fe-S) centers, to quinones in the respiratory chain. The immediate electron acceptor for the enzyme in this species is believed to be ubiquinone. Couples the redox reaction to proton translocation (for every two electrons transferred, four hydrogen ions are translocated across the cytoplasmic membrane), and thus conserves the redox energy in a proton gradient. This subunit may bind ubiquinone. This Methylobacillus flagellatus (strain ATCC 51484 / DSM 6875 / VKM B-1610 / KT) protein is NADH-quinone oxidoreductase subunit H.